The following is a 134-amino-acid chain: MKKTPLLNIALSRVIASLGHGDILMIVDAGMPVPPGVELIDLALTRGVPDFVSVLDVVLSEMQVESHVLAREMADIKPPALQIIESLNLDDQLGQQRWISHEDLKALSRTAKAIIRTGECQPYSNLALVSGVVF.

His-20 (proton donor) is an active-site residue. Residues Asp-28, His-101, and 123 to 125 contribute to the substrate site; that span reads YSN.

This sequence belongs to the RbsD / FucU family. RbsD subfamily. As to quaternary structure, homodecamer.

The protein localises to the cytoplasm. It carries out the reaction beta-D-ribopyranose = beta-D-ribofuranose. The protein operates within carbohydrate metabolism; D-ribose degradation; D-ribose 5-phosphate from beta-D-ribopyranose: step 1/2. Catalyzes the interconversion of beta-pyran and beta-furan forms of D-ribose. The chain is D-ribose pyranase from Pseudomonas syringae pv. tomato (strain ATCC BAA-871 / DC3000).